A 194-amino-acid polypeptide reads, in one-letter code: Peptidyl-tRNA hydrolase (194 aa).

TRNA is bound at residue Y17. The active-site Proton acceptor is H22. TRNA contacts are provided by F68, N70, and N116.

It belongs to the PTH family. In terms of assembly, monomer.

It localises to the cytoplasm. The enzyme catalyses an N-acyl-L-alpha-aminoacyl-tRNA + H2O = an N-acyl-L-amino acid + a tRNA + H(+). Its function is as follows. Hydrolyzes ribosome-free peptidyl-tRNAs (with 1 or more amino acids incorporated), which drop off the ribosome during protein synthesis, or as a result of ribosome stalling. Catalyzes the release of premature peptidyl moieties from peptidyl-tRNA molecules trapped in stalled 50S ribosomal subunits, and thus maintains levels of free tRNAs and 50S ribosomes. This Shewanella halifaxensis (strain HAW-EB4) protein is Peptidyl-tRNA hydrolase.